We begin with the raw amino-acid sequence, 275 residues long: Dermonecrotic toxin LspiSicTox-betaIE4i (275 aa).

The Mg(2+) site is built by glutamate 24 and aspartate 26. The active-site Nucleophile is the histidine 40. Intrachain disulfides connect cysteine 44–cysteine 50 and cysteine 46–cysteine 188. Aspartate 84 is a Mg(2+) binding site.

The protein belongs to the arthropod phospholipase D family. Class II subfamily. Requires Mg(2+) as cofactor. Expressed by the venom gland.

Its subcellular location is the secreted. The enzyme catalyses an N-(acyl)-sphingosylphosphocholine = an N-(acyl)-sphingosyl-1,3-cyclic phosphate + choline. It carries out the reaction an N-(acyl)-sphingosylphosphoethanolamine = an N-(acyl)-sphingosyl-1,3-cyclic phosphate + ethanolamine. The catalysed reaction is a 1-acyl-sn-glycero-3-phosphocholine = a 1-acyl-sn-glycero-2,3-cyclic phosphate + choline. It catalyses the reaction a 1-acyl-sn-glycero-3-phosphoethanolamine = a 1-acyl-sn-glycero-2,3-cyclic phosphate + ethanolamine. In terms of biological role, dermonecrotic toxins cleave the phosphodiester linkage between the phosphate and headgroup of certain phospholipids (sphingolipid and lysolipid substrates), forming an alcohol (often choline) and a cyclic phosphate. This toxin acts on sphingomyelin (SM). It may also act on ceramide phosphoethanolamine (CPE), lysophosphatidylcholine (LPC) and lysophosphatidylethanolamine (LPE), but not on lysophosphatidylserine (LPS), and lysophosphatidylglycerol (LPG). It acts by transphosphatidylation, releasing exclusively cyclic phosphate products as second products. Induces dermonecrosis, hemolysis, increased vascular permeability, edema, inflammatory response, and platelet aggregation. This Loxosceles spinulosa (Recluse spider) protein is Dermonecrotic toxin LspiSicTox-betaIE4i.